The sequence spans 571 residues: Fumarate reductase (cytochrome) (571 aa).

Heme c-binding residues include histidine 8, cysteine 14, cysteine 17, histidine 18, cysteine 36, cysteine 39, histidine 40, histidine 52, histidine 58, histidine 61, cysteine 68, cysteine 71, histidine 72, alanine 74, histidine 75, cysteine 82, cysteine 85, histidine 86, asparagine 91, and tyrosine 94. The flavoprotein-like stretch occupies residues 118–571 (ALASAPHDTV…EEAAKYSKKN (454 aa)). Positions 137, 156, 164, 165, 169, 170, 171, 278, and 338 each coordinate FAD. Glycine 170 lines the succinate pocket. Succinate contacts are provided by histidine 365, threonine 377, and glutamate 378. Fumarate contacts are provided by threonine 377, glutamate 378, and arginine 402. The Proton donor role is filled by arginine 402. A heme c-binding site is contributed by lysine 431. Histidine 504 provides a ligand contact to succinate. Residue histidine 504 participates in fumarate binding. Residues histidine 505 and glutamate 534 each contribute to the FAD site. Positions 544 and 547 each coordinate succinate. Fumarate-binding residues include arginine 544 and glycine 547. The FAD site is built by alanine 549 and isoleucine 550.

As to quaternary structure, monomer. The cofactor is FAD. Requires heme c as cofactor.

The protein localises to the periplasm. It catalyses the reaction 2 Fe(III)-[cytochrome c] + succinate = fumarate + 2 Fe(II)-[cytochrome c] + 2 H(+). Its function is as follows. Flavocytochrome that catalyzes the reduction of fumarate to succinate. Is essential for fumarate respiration during anaerobic growth, acting as the terminal reductase. Receives electrons from the membrane-bound tetraheme c-type cytochrome CymA. In vitro, can use the artificial electron donor methyl viologen. The sequence is that of Fumarate reductase (cytochrome) (fccA) from Shewanella frigidimarina.